The chain runs to 430 residues: Keratin, type I cytoskeletal 18 (430 aa).

Serine 2 bears the N-acetylserine mark. Residues 2-79 form a head region; it reads SFTTRSTFST…GLAGMGGIQN (78 aa). 4 positions are modified to phosphoserine: serine 7, serine 10, serine 15, and serine 18. Residues serine 30 and serine 31 each carry the phosphoserine; alternate modification. O-linked (GlcNAc) serine; alternate glycans are attached at residues serine 30 and serine 31. Serine 34 bears the Phosphoserine; by CDK1 mark. Tyrosine 36 carries the phosphotyrosine modification. Serine 42 is modified (phosphoserine). An Omega-N-methylarginine modification is found at arginine 45. The residue at position 49 (serine 49) is a Phosphoserine; alternate. Serine 49 is a glycosylation site (O-linked (GlcNAc) serine; alternate). A Phosphoserine; by MAPKAPK2 and MAPKAPK3 modification is found at serine 51. Phosphothreonine is present on threonine 52. Phosphoserine; by CAMK, PKC/PRKCE and AURKA is present on serine 53. Arginine 55 is modified (omega-N-methylarginine). At serine 60 the chain carries Phosphoserine. Threonine 65 is modified (phosphothreonine). Positions 70-373 are necessary for interaction with PNN; that stretch reads GLAGMGGIQN…EALLNIKVKL (304 aa). Residues 77–128 form an interaction with TRADD region; the sequence is IQNEKETMQSLNDRLASYLDRVRSLETENRRLESKIREHLEKKGPQVRDWSH. The coil 1A stretch occupies residues 80–115; sequence EKETMQSLNDRLASYLDRVRSLETENRRLESKIREH. The IF rod domain maps to 80 to 391; sequence EKETMQSLND…RLLEDGEDFN (312 aa). A Glycyl lysine isopeptide (Lys-Gly) (interchain with G-Cter in SUMO2) cross-link involves residue lysine 81. 2 positions are modified to phosphoserine: serine 93 and serine 100. Positions 116-132 are linker 1; the sequence is LEKKGPQVRDWSHYFKI. Lysine 131 carries the post-translational modification N6-acetyllysine. The segment at 133–224 is coil 1B; the sequence is IEDLRAQIFA…KNHEEEVKGL (92 aa). Phosphoserine is present on serine 177. A linker 12 region spans residues 225 to 248; sequence QAQIASSGLTVEVDAPKSQDLAKI. The segment at 243-391 is interaction with DNAJB6; that stretch reads QDLAKIMADI…RLLEDGEDFN (149 aa). Lysine 247 participates in a covalent cross-link: Glycyl lysine isopeptide (Lys-Gly) (interchain with G-Cter in SUMO2). The coil 2 stretch occupies residues 249–387; sequence MADIRAQYDE…ATYRRLLEDG (139 aa). Threonine 302 is modified (phosphothreonine). 3 positions are modified to phosphoserine: serine 305, serine 319, and serine 323. Residues lysine 370 and lysine 372 each participate in a glycyl lysine isopeptide (Lys-Gly) (interchain with G-Cter in SUMO2) cross-link. The tail stretch occupies residues 388–430; sequence EDFNLGDALDSSNSMQTIQKTTTRRIVDGKVVSETNDTKVLRH. A phosphoserine mark is found at serine 398, serine 399, and serine 401. The residue at position 404 (threonine 404) is a Phosphothreonine. Lysine 417 is covalently cross-linked (Glycyl lysine isopeptide (Lys-Gly) (interchain with G-Cter in SUMO2)). Lysine 426 is modified (N6-acetyllysine; alternate). Residue lysine 426 forms a Glycyl lysine isopeptide (Lys-Gly) (interchain with G-Cter in SUMO1); alternate linkage. Residue lysine 426 forms a Glycyl lysine isopeptide (Lys-Gly) (interchain with G-Cter in SUMO2); alternate linkage.

It belongs to the intermediate filament family. Heterotetramer of two type I and two type II keratins. KRT18 associates with KRT8. Interacts with PLEC isoform 1C, when in a heterodimer with KRT8. Interacts with the thrombin-antithrombin complex. Interacts with PNN and mutated CFTR. Interacts with YWHAE, YWHAH and YWHAZ only when phosphorylated. Interacts with DNAJB6, TCHP and TRADD. Interacts with FAM83H. Interacts with EPPK1. Interacts with PKP1 and PKP2. In terms of assembly, (Microbial infection) Interacts with hepatitis C virus/HCV core protein. In terms of processing, phosphorylation at Ser-34 increases during mitosis. Hyperphosphorylated at Ser-53 in diseased cirrhosis liver. Phosphorylation increases by IL-6. Post-translationally, proteolytically cleaved by caspases during epithelial cell apoptosis. Cleavage occurs at Asp-238 by either caspase-3, caspase-6 or caspase-7. O-GlcNAcylation increases solubility, and decreases stability by inducing proteasomal degradation. Expressed in colon, placenta, liver and very weakly in exocervix. Increased expression observed in lymph nodes of breast carcinoma.

The protein resides in the nucleus matrix. It localises to the cytoplasm. Its subcellular location is the perinuclear region. The protein localises to the nucleus. It is found in the nucleolus. In terms of biological role, involved in the uptake of thrombin-antithrombin complexes by hepatic cells. When phosphorylated, plays a role in filament reorganization. Involved in the delivery of mutated CFTR to the plasma membrane. Together with KRT8, is involved in interleukin-6 (IL-6)-mediated barrier protection. In Homo sapiens (Human), this protein is Keratin, type I cytoskeletal 18 (KRT18).